The primary structure comprises 73 residues: DNA-binding protein S1FA3 (73 aa).

The short motif at Pro-47 to Lys-52 is the Nuclear localization signal element. A compositionally biased stretch (basic residues) spans Pro-47–Lys-63. Residues Pro-47–Glu-73 are disordered.

This sequence belongs to the S1FA transcription factor family.

The protein resides in the nucleus. Its function is as follows. DNA-binding protein that specifically recognizes a negative element (S1F) within the RPS1 promoter. The sequence is that of DNA-binding protein S1FA3 (S1FA3) from Arabidopsis thaliana (Mouse-ear cress).